A 63-amino-acid chain; its full sequence is Large ribosomal subunit protein uL30 (63 aa).

The protein belongs to the universal ribosomal protein uL30 family. Part of the 50S ribosomal subunit.

This chain is Large ribosomal subunit protein uL30, found in Hahella chejuensis (strain KCTC 2396).